The primary structure comprises 87 residues: Putative outer membrane protein ArbH (87 aa).

Positions methionine 1–alanine 23 are cleaved as a signal peptide.

The protein belongs to the porin LamB (TC 1.B.3) family.

The protein resides in the cell outer membrane. Its function is as follows. May be a sugar porin with a broad carbohydrate specificity. This chain is Putative outer membrane protein ArbH (arbH), found in Dickeya chrysanthemi (Pectobacterium chrysanthemi).